The primary structure comprises 451 residues: Target of rapamycin complex 1 subunit tco89 (451 aa).

The disordered stretch occupies residues 1 to 35; sequence MERPSLSRRTSSSTVSTDGEGVYSRSTKERKRNFI. Residues 7-17 are compositionally biased toward low complexity; it reads SRRTSSSTVST. Position 70 is a phosphoserine (S70). Disordered stretches follow at residues 122-164, 176-264, and 362-437; these read WDDA…PVTR, INSN…GNSL, and NQNF…DTDY. Positions 129–162 are enriched in polar residues; it reads NDSTAGNLDSDSALPTPSVTTNEAADSSRASSPV. Residues 203-215 show a composition bias toward low complexity; the sequence is DDSAADASTTKSS. Composition is skewed to polar residues over residues 228 to 242, 362 to 376, and 407 to 417; these read HSNN…NQPK, NQNF…TSAA, and QSASLNASMSA. Positions 419 to 430 are enriched in basic residues; it reads SHARQRSIHVPK.

The protein belongs to the TORC subunit TCO89 family. The target of rapamycin complex 1 (TORC1) is composed of at least mip1, pop3/wat1, tco89, toc1 and tor2. In terms of processing, either Thr-10, Ser-11, Ser-12, Ser-13 or Thr-14 and Ser-214 or Ser-215 and Ser-247 or Ser-249 are phosphorylated as well.

It is found in the cytoplasm. In terms of biological role, component of TORC1, which regulates multiple cellular processes to control cell growth in response to environmental signals. Tor2 is essential for growth. Nutrient limitation and environmental stress signals cause inactivation of TORC1. Active TORC1 positively controls cell growth and ribosome biogenesis by regulating ribosomal protein gene expression. TORC1 negatively controls G1 cell-cycle arrest, sexual development and amino acid uptake. Represses mating, meiosis and sporulation efficiency by interfering with the functions of the transcription factor ste11 and the meiosis-promoting RNA-binding protein mei2. The chain is Target of rapamycin complex 1 subunit tco89 from Schizosaccharomyces pombe (strain 972 / ATCC 24843) (Fission yeast).